A 194-amino-acid polypeptide reads, in one-letter code: Large ribosomal subunit protein eL15 (194 aa).

The segment at 164-194 (AGRKARGLRRKGRGAEKVRPSLRANFRKKRR) is disordered. A compositionally biased stretch (basic residues) spans 166-175 (RKARGLRRKG).

The protein belongs to the eukaryotic ribosomal protein eL15 family.

This Archaeoglobus fulgidus (strain ATCC 49558 / DSM 4304 / JCM 9628 / NBRC 100126 / VC-16) protein is Large ribosomal subunit protein eL15 (rpl15e).